A 124-amino-acid polypeptide reads, in one-letter code: Small ribosomal subunit protein uS12 (124 aa).

3-methylthioaspartic acid is present on aspartate 89.

The protein belongs to the universal ribosomal protein uS12 family. Part of the 30S ribosomal subunit. Contacts proteins S8 and S17. May interact with IF1 in the 30S initiation complex.

In terms of biological role, with S4 and S5 plays an important role in translational accuracy. Its function is as follows. Interacts with and stabilizes bases of the 16S rRNA that are involved in tRNA selection in the A site and with the mRNA backbone. Located at the interface of the 30S and 50S subunits, it traverses the body of the 30S subunit contacting proteins on the other side and probably holding the rRNA structure together. The combined cluster of proteins S8, S12 and S17 appears to hold together the shoulder and platform of the 30S subunit. This Shewanella baltica (strain OS223) protein is Small ribosomal subunit protein uS12.